The following is a 237-amino-acid chain: MTKATPRRRRWRIGELAGATGVTVRTLHHYEHTGLLAASERTDGGHRMYDRESIQRVHQIRALRELGFSLQEIRRAMDGRTSLTDLLRKHLQRIEVQVARATQLRDRLRNMTTDGDVRVSVDQLPAALDAMSKVEKRPQPRPCTCALAADREERWRRIRNDLRHCMDRNEHPCSDRTKAVALEARTLISEIAGNDLTGSTILKVLARLSDPRSLAGWDPHLMQYLDSALVALGDQPH.

Positions 10–79 constitute an HTH merR-type domain; sequence RWRIGELAGA…LQEIRRAMDG (70 aa). The segment at residues 13–32 is a DNA-binding region (H-T-H motif); it reads IGELAGATGVTVRTLHHYEH.

Its function is as follows. Involved in genotype-specific nodulation of soybeans. This Bradyrhizobium sp. (strain NC92) protein is Nodulation protein NolA (nolA).